The sequence spans 312 residues: MFNRIHITVNQLVASDLFLGYHIANWNPRTNFFLIGKYKNTNIFNLNYTYFLAKKFIVFLSELFVNKGHLWLVNENFSLFNRSSELYQLYSLFPEITFLNSKWCKGMLSNYKYVSIVKPAKFPHSIFVPNIQNNHYVINESFIINIPSIAIVDSIDNPSNVFFPIPGNSKSLKSLFFFYMVIAKSLFYSRYITSSKFIFNSINRLNGLNSKLYRNLFVRDYFAFFKKRFLLENIIFLFKSGFFSKKKFNFLFRPKMHITSKTLLFKWKMPLLILSSVFKNVLHWDIFNKIVLKKRLVVKNLQFFKTLMFVLI.

Belongs to the universal ribosomal protein uS2 family.

Its subcellular location is the mitochondrion. The sequence is that of Small ribosomal subunit protein uS2m (RPS2) from Acanthamoeba castellanii (Amoeba).